A 245-amino-acid polypeptide reads, in one-letter code: tRNA pseudouridine synthase A (245 aa).

Catalysis depends on Asp-52, which acts as the Nucleophile. Tyr-111 contacts substrate.

The protein belongs to the tRNA pseudouridine synthase TruA family. In terms of assembly, homodimer.

It carries out the reaction uridine(38/39/40) in tRNA = pseudouridine(38/39/40) in tRNA. Functionally, formation of pseudouridine at positions 38, 39 and 40 in the anticodon stem and loop of transfer RNAs. The sequence is that of tRNA pseudouridine synthase A from Ehrlichia chaffeensis (strain ATCC CRL-10679 / Arkansas).